The following is a 229-amino-acid chain: Probable septum site-determining protein MinC (229 aa).

This sequence belongs to the MinC family. In terms of assembly, interacts with MinD and FtsZ.

Functionally, cell division inhibitor that blocks the formation of polar Z ring septums. Rapidly oscillates between the poles of the cell to destabilize FtsZ filaments that have formed before they mature into polar Z rings. Prevents FtsZ polymerization. In Ruminiclostridium cellulolyticum (strain ATCC 35319 / DSM 5812 / JCM 6584 / H10) (Clostridium cellulolyticum), this protein is Probable septum site-determining protein MinC.